The sequence spans 339 residues: NADH-quinone oxidoreductase subunit H (339 aa).

9 consecutive transmembrane segments (helical) span residues 10–30 (FPLT…ILCV), 50–70 (PNVV…KLLF), 82–102 (ILFI…WAVI), 115–135 (VGVL…IIAG), 161–181 (MGLV…SGII), 187–207 (LPWW…ISVL), 235–255 (MGFA…SAMT), 275–295 (IPGF…FLWI), and 311–331 (GWKV…SVLF).

Belongs to the complex I subunit 1 family. In terms of assembly, NDH-1 is composed of 14 different subunits. Subunits NuoA, H, J, K, L, M, N constitute the membrane sector of the complex.

The protein localises to the cell inner membrane. It carries out the reaction a quinone + NADH + 5 H(+)(in) = a quinol + NAD(+) + 4 H(+)(out). NDH-1 shuttles electrons from NADH, via FMN and iron-sulfur (Fe-S) centers, to quinones in the respiratory chain. The immediate electron acceptor for the enzyme in this species is believed to be ubiquinone. Couples the redox reaction to proton translocation (for every two electrons transferred, four hydrogen ions are translocated across the cytoplasmic membrane), and thus conserves the redox energy in a proton gradient. This subunit may bind ubiquinone. The polypeptide is NADH-quinone oxidoreductase subunit H (Rickettsia prowazekii (strain Madrid E)).